The chain runs to 249 residues: Major phosphate-irrepressible acid phosphatase (249 aa).

The signal sequence occupies residues 1–20 (MKKNIIAGCLFSLFSLSALA).

It belongs to the class A bacterial acid phosphatase family. Homotetramer.

It localises to the periplasm. The enzyme catalyses a phosphate monoester + H2O = an alcohol + phosphate. The sequence is that of Major phosphate-irrepressible acid phosphatase (phoC) from Morganella morganii (Proteus morganii).